Consider the following 240-residue polypeptide: MQAKIKNKRVLVKFSGEALAGDNQFGIDIHVLDHIAKEIRSLVENDIEVGIVIGGGNIIRGVSAAQGGIIRRTSGDYMGMLATVINAVAMQEALEHIGLDTRVQSAIEIKEICESYIYRKAIRHLEKGRVVIFGAGTGNPFFTTDTAATLRAIEIGSDLIIKATKVDGIYDKDPNKFKDAKKLDTLSYNDALIGDIEVMDDTAISLAKDNKLPIVVCNMFKKGNLLQVIKHQQGVFSMVK.

13–16 (KFSG) contacts ATP. Gly55 serves as a coordination point for UMP. Residues Gly56 and Arg60 each coordinate ATP. Residues Asp76 and 137–144 (TGNPFFTT) each bind UMP. Residues Thr164, Tyr170, and Asp173 each coordinate ATP.

The protein belongs to the UMP kinase family. As to quaternary structure, homohexamer.

It is found in the cytoplasm. It carries out the reaction UMP + ATP = UDP + ADP. It functions in the pathway pyrimidine metabolism; CTP biosynthesis via de novo pathway; UDP from UMP (UMPK route): step 1/1. Its activity is regulated as follows. Inhibited by UTP. Catalyzes the reversible phosphorylation of UMP to UDP. The sequence is that of Uridylate kinase from Helicobacter pylori (strain J99 / ATCC 700824) (Campylobacter pylori J99).